A 418-amino-acid polypeptide reads, in one-letter code: Tyrosine--tRNA ligase 1 (418 aa).

Tyr-34 is an L-tyrosine binding site. The 'HIGH' region signature appears at Pro-39–His-48. Positions 169 and 173 each coordinate L-tyrosine. Residues Lys-230–Thr-234 carry the 'KMSKS' region motif. Position 233 (Lys-233) interacts with ATP. The S4 RNA-binding domain occupies Thr-352–Tyr-418.

Belongs to the class-I aminoacyl-tRNA synthetase family. TyrS type 1 subfamily. Homodimer.

It is found in the cytoplasm. It carries out the reaction tRNA(Tyr) + L-tyrosine + ATP = L-tyrosyl-tRNA(Tyr) + AMP + diphosphate + H(+). Catalyzes the attachment of tyrosine to tRNA(Tyr) in a two-step reaction: tyrosine is first activated by ATP to form Tyr-AMP and then transferred to the acceptor end of tRNA(Tyr). The protein is Tyrosine--tRNA ligase 1 of Bacillus cereus (strain ATCC 14579 / DSM 31 / CCUG 7414 / JCM 2152 / NBRC 15305 / NCIMB 9373 / NCTC 2599 / NRRL B-3711).